The chain runs to 135 residues: Large ribosomal subunit protein mL61 (135 aa).

The segment covering 114 to 129 (HHESSPENIKEAHKQD) has biased composition (basic and acidic residues). Residues 114–135 (HHESSPENIKEAHKQDYSPPSN) are disordered.

It belongs to the mitochondrion-specific ribosomal protein mL61 family. Component of the mitochondrial large ribosomal subunit (mt-LSU). Mature yeast 74S mitochondrial ribosomes consist of a small (37S) and a large (54S) subunit. The 37S small subunit contains a 15S ribosomal RNA (15S mt-rRNA) and at least 32 different proteins. The 54S large subunit contains a 21S rRNA (21S mt-rRNA) and at least 45 different proteins.

The protein localises to the mitochondrion. In terms of biological role, component of the mitochondrial ribosome (mitoribosome), a dedicated translation machinery responsible for the synthesis of mitochondrial genome-encoded proteins, including at least some of the essential transmembrane subunits of the mitochondrial respiratory chain. The mitoribosomes are attached to the mitochondrial inner membrane and translation products are cotranslationally integrated into the membrane. mL61 is not essential in cells grown at 30 degrees Celsius but is required for mitochondrial translation in cells grown at 18 degrees Celsius. The chain is Large ribosomal subunit protein mL61 (mrp49) from Schizosaccharomyces pombe (strain 972 / ATCC 24843) (Fission yeast).